The chain runs to 534 residues: Light-independent protochlorophyllide reductase subunit B (534 aa).

A [4Fe-4S] cluster-binding site is contributed by Asp-36. Asp-274 (proton donor) is an active-site residue. 409–410 is a substrate binding site; sequence GL. Positions 426 to 446 are disordered; the sequence is DEAGPSHHGGKAVPASAPRAD.

Belongs to the ChlB/BchB/BchZ family. Protochlorophyllide reductase is composed of three subunits; BchL, BchN and BchB. Forms a heterotetramer of two BchB and two BchN subunits. [4Fe-4S] cluster serves as cofactor.

The catalysed reaction is chlorophyllide a + oxidized 2[4Fe-4S]-[ferredoxin] + 2 ADP + 2 phosphate = protochlorophyllide a + reduced 2[4Fe-4S]-[ferredoxin] + 2 ATP + 2 H2O. It functions in the pathway porphyrin-containing compound metabolism; bacteriochlorophyll biosynthesis (light-independent). Functionally, component of the dark-operative protochlorophyllide reductase (DPOR) that uses Mg-ATP and reduced ferredoxin to reduce ring D of protochlorophyllide (Pchlide) to form chlorophyllide a (Chlide). This reaction is light-independent. The NB-protein (BchN-BchB) is the catalytic component of the complex. This chain is Light-independent protochlorophyllide reductase subunit B, found in Cereibacter sphaeroides (strain ATCC 17029 / ATH 2.4.9) (Rhodobacter sphaeroides).